Consider the following 806-residue polypeptide: Acetyl-CoA decarbonylase/synthase complex subunit alpha 1 (806 aa).

C73, C76, C77, C79, C84, and C94 together coordinate [4Fe-4S] cluster. A CO-binding site is contributed by H117. [Ni-4Fe-4S] cluster contacts are provided by H250, C278, and C323. 2 consecutive 4Fe-4S ferredoxin-type domains span residues 407-436 (DEEF…IPEA) and 446-475 (SYLE…LNII). [4Fe-4S] cluster is bound by residues C417, C420, C423, C427, C455, C458, C461, and C465. [Ni-4Fe-4S] cluster is bound by residues C523, C552, and C587.

It belongs to the Ni-containing carbon monoxide dehydrogenase family. As to quaternary structure, heterotetramer of two alpha and two epsilon subunits. The ACDS complex is made up of alpha, epsilon, beta, gamma and delta subunits with a probable stoichiometry of (alpha(2)epsilon(2))(4)-beta(8)-(gamma(1)delta(1))(8). [4Fe-4S] cluster serves as cofactor. Requires [Ni-4Fe-4S] cluster as cofactor.

It catalyses the reaction CO + 2 oxidized [2Fe-2S]-[ferredoxin] + H2O = 2 reduced [2Fe-2S]-[ferredoxin] + CO2 + 2 H(+). Its pathway is one-carbon metabolism; methanogenesis from acetate. Part of the ACDS complex that catalyzes the reversible cleavage of acetyl-CoA, allowing growth on acetate as sole source of carbon and energy. The alpha-epsilon subcomponent functions as a carbon monoxide dehydrogenase. This is Acetyl-CoA decarbonylase/synthase complex subunit alpha 1 from Methanosarcina acetivorans (strain ATCC 35395 / DSM 2834 / JCM 12185 / C2A).